The sequence spans 264 residues: Thymidylate synthase (264 aa).

Arginine 21 contacts dUMP. Histidine 51 lines the (6R)-5,10-methylene-5,6,7,8-tetrahydrofolate pocket. Residue 126–127 coordinates dUMP; it reads RR. Cysteine 146 serves as the catalytic Nucleophile. DUMP-binding positions include 166-169, asparagine 177, and 207-209; these read RSAD and HLY. Residue aspartate 169 coordinates (6R)-5,10-methylene-5,6,7,8-tetrahydrofolate. Alanine 263 serves as a coordination point for (6R)-5,10-methylene-5,6,7,8-tetrahydrofolate.

This sequence belongs to the thymidylate synthase family. Bacterial-type ThyA subfamily. Homodimer.

The protein resides in the cytoplasm. It catalyses the reaction dUMP + (6R)-5,10-methylene-5,6,7,8-tetrahydrofolate = 7,8-dihydrofolate + dTMP. Its pathway is pyrimidine metabolism; dTTP biosynthesis. Its function is as follows. Catalyzes the reductive methylation of 2'-deoxyuridine-5'-monophosphate (dUMP) to 2'-deoxythymidine-5'-monophosphate (dTMP) while utilizing 5,10-methylenetetrahydrofolate (mTHF) as the methyl donor and reductant in the reaction, yielding dihydrofolate (DHF) as a by-product. This enzymatic reaction provides an intracellular de novo source of dTMP, an essential precursor for DNA biosynthesis. The polypeptide is Thymidylate synthase (Chelativorans sp. (strain BNC1)).